The chain runs to 335 residues: F420-dependent glucose-6-phosphate dehydrogenase 1 (335 aa).

Residue aspartate 38 coordinates coenzyme F420-(gamma-Glu)n. The active-site Proton donor is histidine 39. Residues threonine 75 and 106-107 (TG) each bind coenzyme F420-(gamma-Glu)n. Residue glutamate 108 is the Proton acceptor of the active site. Residues asparagine 111, 176 to 177 (GG), and 179 to 180 (VV) each bind coenzyme F420-(gamma-Glu)n. Residues threonine 194, lysine 197, lysine 258, and arginine 282 each contribute to the substrate site.

This sequence belongs to the F420-dependent glucose-6-phosphate dehydrogenase family. As to quaternary structure, homodimer.

It catalyses the reaction oxidized coenzyme F420-(gamma-L-Glu)(n) + D-glucose 6-phosphate + H(+) = 6-phospho-D-glucono-1,5-lactone + reduced coenzyme F420-(gamma-L-Glu)(n). Its function is as follows. Catalyzes the coenzyme F420-dependent oxidation of glucose 6-phosphate (G6P) to 6-phosphogluconolactone. The polypeptide is F420-dependent glucose-6-phosphate dehydrogenase 1 (Rhodococcus jostii (strain RHA1)).